The chain runs to 348 residues: Chaperone protein DnaJ (348 aa).

The region spanning 3 to 65 is the J domain; it reads DLYGILGVDH…EQRQRYDRHV (63 aa). Residues 109–191 form a CR-type zinc finger; the sequence is GGSQVVKIDS…CYGNGSRSAP (83 aa). Residues Cys-122, Cys-125, Cys-139, Cys-142, Cys-165, Cys-168, Cys-179, and Cys-182 each coordinate Zn(2+). CXXCXGXG motif repeat units lie at residues 122-129, 139-146, 165-172, and 179-186; these read CDVCNGTR, CFDCNGSG, CSKCRGNG, and CRRCYGNG.

It belongs to the DnaJ family. In terms of assembly, homodimer. Zn(2+) is required as a cofactor.

The protein resides in the cytoplasm. In terms of biological role, participates actively in the response to hyperosmotic and heat shock by preventing the aggregation of stress-denatured proteins and by disaggregating proteins, also in an autonomous, DnaK-independent fashion. Unfolded proteins bind initially to DnaJ; upon interaction with the DnaJ-bound protein, DnaK hydrolyzes its bound ATP, resulting in the formation of a stable complex. GrpE releases ADP from DnaK; ATP binding to DnaK triggers the release of the substrate protein, thus completing the reaction cycle. Several rounds of ATP-dependent interactions between DnaJ, DnaK and GrpE are required for fully efficient folding. Also involved, together with DnaK and GrpE, in the DNA replication of plasmids through activation of initiation proteins. The sequence is that of Chaperone protein DnaJ from Tropheryma whipplei (strain TW08/27) (Whipple's bacillus).